Reading from the N-terminus, the 305-residue chain is Small ribosomal subunit protein uS3 (305 aa).

Positions 17 to 86 (IDEFFSEELS…DPQVDVQEVD (70 aa)) constitute a KH type-2 domain. 2 stretches are compositionally biased toward acidic residues: residues 207 to 262 (EPEG…EAET) and 272 to 305 (AAEEPDEALDEDVEAEAEELLDEMEDETTDEEET). Positions 207–305 (EPEGDVEELL…EDETTDEEET (99 aa)) are disordered.

The protein belongs to the universal ribosomal protein uS3 family. Part of the 30S ribosomal subunit.

Functionally, binds the lower part of the 30S subunit head. The protein is Small ribosomal subunit protein uS3 of Natronomonas pharaonis (strain ATCC 35678 / DSM 2160 / CIP 103997 / JCM 8858 / NBRC 14720 / NCIMB 2260 / Gabara) (Halobacterium pharaonis).